The primary structure comprises 572 residues: Proline--tRNA ligase (572 aa).

The protein belongs to the class-II aminoacyl-tRNA synthetase family. ProS type 1 subfamily. As to quaternary structure, homodimer.

It is found in the cytoplasm. It carries out the reaction tRNA(Pro) + L-proline + ATP = L-prolyl-tRNA(Pro) + AMP + diphosphate. Its function is as follows. Catalyzes the attachment of proline to tRNA(Pro) in a two-step reaction: proline is first activated by ATP to form Pro-AMP and then transferred to the acceptor end of tRNA(Pro). As ProRS can inadvertently accommodate and process non-cognate amino acids such as alanine and cysteine, to avoid such errors it has two additional distinct editing activities against alanine. One activity is designated as 'pretransfer' editing and involves the tRNA(Pro)-independent hydrolysis of activated Ala-AMP. The other activity is designated 'posttransfer' editing and involves deacylation of mischarged Ala-tRNA(Pro). The misacylated Cys-tRNA(Pro) is not edited by ProRS. The protein is Proline--tRNA ligase of Haemophilus influenzae (strain PittGG).